The primary structure comprises 77 residues: U8-lycotoxin-Ls1g (77 aa).

The first 20 residues, 1 to 20, serve as a signal peptide directing secretion; it reads MKLIIFTGLVLFAIVSLIEV. The propeptide occupies 21 to 26; the sequence is QADNER.

This sequence belongs to the neurotoxin 19 (CSTX) family. 08 (U8-Lctx) subfamily. Post-translationally, contains 4 disulfide bonds. In terms of tissue distribution, expressed by the venom gland.

The protein localises to the secreted. The chain is U8-lycotoxin-Ls1g from Lycosa singoriensis (Wolf spider).